Reading from the N-terminus, the 1068-residue chain is WD repeat-containing protein on Y chromosome (1068 aa).

7 WD repeats span residues 155–199, 201–242, 322–361, 365–404, 455–494, 507–546, and 594–634; these read DEVT…IRTA, SESI…RGPF, RIPLGVSTFFVAESHNIVVTGGPDTFVRIWDVYIPTEPSA, GHNGGIVLVFVQPEENKVYSVDYQKIIKVWDLHEHTLLQT, THAAPVSVVLYNRLFRNVVSCGLDSYIIVWDPWTGRRKII, IIDIEITAACFDPLEQFLLTGARDGSLKIWNYNNAVVVRN, and FHTD…RRYS. The segment at 657 to 687 is disordered; that stretch reads SKRLASRPTPGNHGLQMGRAGRSTVLNRPED. WD repeat units lie at residues 746-785 and 829-868; these read KTGDCVLTMCTDRKNRYLYTGTAFGYIKVWHIENFCVPET and GHLKAINSISFINLPKIIFTGSHDYSCRLWTQGGRYLGTL. The tract at residues 1026–1068 is disordered; that stretch reads SAINIKQPSRRRSDKTNDTRNVRTPRARDLIALEMSSSHASQS. Over residues 1039–1056 the composition is skewed to basic and acidic residues; the sequence is DKTNDTRNVRTPRARDLI.

The polypeptide is WD repeat-containing protein on Y chromosome (Drosophila yakuba (Fruit fly)).